Here is a 460-residue protein sequence, read N- to C-terminus: A-type ATP synthase subunit B 1 (460 aa).

Belongs to the ATPase alpha/beta chains family. Has multiple subunits with at least A(3), B(3), C, D, E, F, H, I and proteolipid K(x).

The protein resides in the cell membrane. Functionally, component of the A-type ATP synthase that produces ATP from ADP in the presence of a proton gradient across the membrane. The B chain is a regulatory subunit. The chain is A-type ATP synthase subunit B 1 from Methanospirillum hungatei JF-1 (strain ATCC 27890 / DSM 864 / NBRC 100397 / JF-1).